The following is an 818-amino-acid chain: Beta-glucosidase (818 aa).

Residue Asp-222 is part of the active site. The 153-residue stretch at 386 to 538 folds into the PA14 domain; sequence VFSGEMTVEY…GDAGIAEAVE (153 aa).

The protein belongs to the glycosyl hydrolase 3 family.

Its subcellular location is the cytoplasm. It catalyses the reaction Hydrolysis of terminal, non-reducing beta-D-glucosyl residues with release of beta-D-glucose.. Its function is as follows. Involved in modifying a vir-inducing plant signal molecule. Hydrolyzes coniferin but not cellobiose. This Rhizobium radiobacter (Agrobacterium tumefaciens) protein is Beta-glucosidase (cbg-1).